The following is a 153-amino-acid chain: Transcriptional repressor NrdR (153 aa).

A zinc finger lies at 3–33 (CPYCNYKESKVIDSRHTDLKSIRRRRECESC). Residues 48-138 (LMVIKKDNSR…VYRQFKDINT (91 aa)) form the ATP-cone domain.

The protein belongs to the NrdR family. Requires Zn(2+) as cofactor.

In terms of biological role, negatively regulates transcription of bacterial ribonucleotide reductase nrd genes and operons by binding to NrdR-boxes. The protein is Transcriptional repressor NrdR of Clostridioides difficile (strain 630) (Peptoclostridium difficile).